We begin with the raw amino-acid sequence, 263 residues long: Rhomboid-like protease 3 (263 aa).

The next 6 membrane-spanning stretches (helical) occupy residues 37-57 (KSIV…CVLS), 86-106 (VVTP…LVFI), 121-141 (KFLV…MLMQ), 142-162 (PWAL…GMAA), 189-209 (LIYF…GGFL), and 231-251 (VLFY…PPLL). The Nucleophile role is filled by serine 150. The active site involves histidine 204.

It belongs to the peptidase S54 family.

It is found in the membrane. It catalyses the reaction Cleaves type-1 transmembrane domains using a catalytic dyad composed of serine and histidine that are contributed by different transmembrane domains.. Functionally, serine protease involved in intramembrane proteolysis and the subsequent release of polypeptides from their membrane anchors. The chain is Rhomboid-like protease 3 (ROM3) from Toxoplasma gondii.